The sequence spans 484 residues: 3-isopropylmalate dehydratase large subunit (484 aa).

Residues C352, C412, and C415 each coordinate [4Fe-4S] cluster. A disordered region spans residues 463-484; the sequence is TLSSPSDLDPAPASAAIRTDAA. The segment covering 464–478 has biased composition (low complexity); sequence LSSPSDLDPAPASAA.

This sequence belongs to the aconitase/IPM isomerase family. LeuC type 1 subfamily. As to quaternary structure, heterodimer of LeuC and LeuD. The cofactor is [4Fe-4S] cluster.

The enzyme catalyses (2R,3S)-3-isopropylmalate = (2S)-2-isopropylmalate. It functions in the pathway amino-acid biosynthesis; L-leucine biosynthesis; L-leucine from 3-methyl-2-oxobutanoate: step 2/4. Functionally, catalyzes the isomerization between 2-isopropylmalate and 3-isopropylmalate, via the formation of 2-isopropylmaleate. This is 3-isopropylmalate dehydratase large subunit from Pseudarthrobacter chlorophenolicus (strain ATCC 700700 / DSM 12829 / CIP 107037 / JCM 12360 / KCTC 9906 / NCIMB 13794 / A6) (Arthrobacter chlorophenolicus).